Here is a 437-residue protein sequence, read N- to C-terminus: MNYTTQMDAAKKGIVTKEMEIVAKKENMNVKDLMELVSKGKVAIPANKNHKSLDPEGIGQGLRTKINVNLGISKDCYNIDMELEKVQKAIDMKAEAIMDLSCFGKTEEFRKRLIDMSPAIIGTVPIYDAVGFYDKELKDITSEEFLKVAEKHAENGADFLTIHVGMNRKTAATFKKNPRTMNIVSRGGSLLYAWMELNNKENPFYEGFDKLLDICEKYDVTLSLGDACRPGCIEDSTDASQIEELIALGELTKRAWERNVQVIIEGPGHMTLDEIEINMKIEKKLCHGAPFYVLGPIVTDIAPGYDHITSAIGGAIAATHGADFLCYVTPAEHLRLPNLDDMKEGIIASKIAAHAADLAKGVKGARDWDNAMAKARRDLDWERMFELSIDEEKARRYREESKAKSKDSCTMCGKMCAVRNMNRVTEGKDLNMLRDDD.

Residues asparagine 69, methionine 98, tyrosine 127, histidine 163, 185–187, 226–229, and glutamate 265 each bind substrate; these read SRG and DACR. Histidine 269 is a binding site for Zn(2+). Position 292 (tyrosine 292) interacts with substrate. Position 333 (histidine 333) interacts with Zn(2+). [4Fe-4S] cluster is bound by residues cysteine 409, cysteine 412, and cysteine 416.

Belongs to the ThiC family. [4Fe-4S] cluster is required as a cofactor.

The enzyme catalyses 5-amino-1-(5-phospho-beta-D-ribosyl)imidazole + S-adenosyl-L-methionine = 4-amino-2-methyl-5-(phosphooxymethyl)pyrimidine + CO + 5'-deoxyadenosine + formate + L-methionine + 3 H(+). It functions in the pathway cofactor biosynthesis; thiamine diphosphate biosynthesis. Catalyzes the synthesis of the hydroxymethylpyrimidine phosphate (HMP-P) moiety of thiamine from aminoimidazole ribotide (AIR) in a radical S-adenosyl-L-methionine (SAM)-dependent reaction. The sequence is that of Phosphomethylpyrimidine synthase from Clostridium botulinum (strain Kyoto / Type A2).